A 1001-amino-acid polypeptide reads, in one-letter code: MAAAMVSSAGGLLAMLNEPHPSLKLHALSYLIRLVDQFWPEISTSVPIIESLYEDEEFDQHQRQLAALLASKVFYYLGELNDSLSYALGAGSLFDVSEDSDYIHTLLSKAIDEYAILRSKAVESSEVVEIDPRLVAIVERMLDKCITDGKYQQAMGIAIECRRLDKLEEAIIKSENVQGTLSYCINVSHSFVNQREYRHEVLRLLVNVYQKLASPDYLSICQCLMFLDEPQGVASILEKLLRSENKDDALLAFQISFDLVQNEHQAFLMSVRDRLPAPKTRPVEAIQAVETSTAQNENTAGDVQMADETPSQTIVHETDPVDAVYAERLTKAKGILSGETSIQLTLQFLYSHNKSDLLILKTIKQSVEMRNSVCHSATIYANAIMHAGTTVDTFLRENLDWLSRATNWAKFSATAGLGVIHRGHLQQGRSLMAPYLPQGGAGGGGSPYSEGGALYALGLIHANHGEGIKQFLRDSLRSTSVEVIQHGACLGLGLAALGTADEDIYDDIKSVLYTDSAVAGEAAGISMGLLLVGTATDKASEMLAYAHETQHEKIIRGLALGIALTVYGREEGADTLIEQMTRDQDPIIRYGGMYALALAYSGTANNKAIRQLLHFAVSDVSDDVRRTAVLALGFVLYSDPEQTPRIVSLLSESYNPHVRYGAALAVGISCAGTGLSEAISLLEPLTSDVVDFVRQGALIAMAMVMVQISEASDSRVGAFRRQLEKIILDKHEDTMSKMGAILASGILDAGGRNVTIRLLSKTKHDKVTAVIGLTVFSQFWYWYPLIYFISLAFSPTAFIGLNYDLKVPKFEFMSHAKPSLFEYPKPTTVATANTAAKLPTAVLSTSAKAKAKAKKEAEQKAKAENSGNEAGKANAASDEKEAESMQVDSTATTVEKKVEPEATFEILVNPARVVPSQEKYIKLMEDSRYVPMKLAPSGFVLLRDLRPHEPEVLSLTDAPTSTASPAVGAEAAGQAQQAATTSAMAIDDEPQPPQAFEYASP.

Position 2 is an N-acetylalanine (A2). K166 is covalently cross-linked (Glycyl lysine isopeptide (Lys-Gly) (interchain with G-Cter in ubiquitin)). PC repeat units lie at residues 412–447 (SATAGLGVIHRGHLQQGRSLMAPYLPQGGAGGGGSP), 452–485 (GALYALGLIHANHGEGIKQFLRDSLRSTSVEVIQ), 487–521 (GACLGLGLAALGTADEDIYDDIKSVLYTDSAVAGE), 522–555 (AAGISMGLLLVGTATDKASEMLAYAHETQHEKII), 557–590 (GLALGIALTVYGREEGADTLIEQMTRDQDPIIRY), 591–626 (GGMYALALAYSGTANNKAIRQLLHFAVSDVSDDVRR), 627–659 (TAVLALGFVLYSDPEQTPRIVSLLSESYNPHVR), 661–695 (GAALAVGISCAGTGLSEAISLLEPLTSDVVDFVRQ), 696–736 (GALI…DTMS), and 739–771 (GAILASGILDAGGRNVTIRLLSKTKHDKVTAVI). Disordered stretches follow at residues 853–896 (AKKE…TVEK) and 954–1001 (SLTD…YASP). The span at 854–863 (KKEAEQKAKA) shows a compositional bias: basic and acidic residues. A Phosphoserine modification is found at S889. Positions 961-985 (STASPAVGAEAAGQAQQAATTSAMA) are enriched in low complexity.

The protein belongs to the proteasome subunit S1 family. In terms of assembly, component of the 19S regulatory particle (RP/PA700) base subcomplex of the 26S proteasome. The 26S proteasome is composed of a core protease (CP), known as the 20S proteasome, capped at one or both ends by the 19S regulatory particle (RP/PA700). The RP/PA700 complex is composed of at least 17 different subunits in two subcomplexes, the base and the lid, which form the portions proximal and distal to the 20S proteolytic core, respectively.

Functionally, acts as a regulatory subunit of the 26 proteasome which is involved in the ATP-dependent degradation of ubiquitinated proteins. The protein is 26S proteasome non-ATPase regulatory subunit 1 homolog B (RPN2B) of Arabidopsis thaliana (Mouse-ear cress).